The sequence spans 184 residues: Glutathione-regulated potassium-efflux system ancillary protein KefG (184 aa).

It belongs to the NAD(P)H dehydrogenase (quinone) family. KefG subfamily. Interacts with KefB.

It is found in the cell inner membrane. It carries out the reaction a quinone + NADH + H(+) = a quinol + NAD(+). The enzyme catalyses a quinone + NADPH + H(+) = a quinol + NADP(+). Its function is as follows. Regulatory subunit of a potassium efflux system that confers protection against electrophiles. Required for full activity of KefB. This is Glutathione-regulated potassium-efflux system ancillary protein KefG from Escherichia coli O1:K1 / APEC.